The chain runs to 275 residues: Diaminopimelate epimerase (275 aa).

Asn12, Gln45, and Asn65 together coordinate substrate. Cys74 (proton donor) is an active-site residue. Substrate contacts are provided by residues 75–76, Asn158, Asn191, and 209–210; these read GN and ER. Cys218 functions as the Proton acceptor in the catalytic mechanism. 219 to 220 lines the substrate pocket; the sequence is GT.

Belongs to the diaminopimelate epimerase family. In terms of assembly, homodimer.

The protein localises to the cytoplasm. It catalyses the reaction (2S,6S)-2,6-diaminopimelate = meso-2,6-diaminopimelate. The protein operates within amino-acid biosynthesis; L-lysine biosynthesis via DAP pathway; DL-2,6-diaminopimelate from LL-2,6-diaminopimelate: step 1/1. Its function is as follows. Catalyzes the stereoinversion of LL-2,6-diaminopimelate (L,L-DAP) to meso-diaminopimelate (meso-DAP), a precursor of L-lysine and an essential component of the bacterial peptidoglycan. In Shewanella putrefaciens (strain CN-32 / ATCC BAA-453), this protein is Diaminopimelate epimerase.